We begin with the raw amino-acid sequence, 896 residues long: NET1-associated nuclear protein 1 (896 aa).

WD repeat units lie at residues tryptophan 295 to leucine 334, leucine 490 to asparagine 542, glycine 552 to cysteine 595, and asparagine 605 to glutamate 645.

As to quaternary structure, interacts with snoRNA U3. Interacts with MPP10. Component of the ribosomal small subunit (SSU) processome composed of at least 40 protein subunits and snoRNA U3. In the absence of snoRNA3, forms a complex with other t-UTPs. This complex can associate with pre-18S ribosomal RNAs.

It localises to the nucleus. Its subcellular location is the nucleolus. In terms of biological role, involved in nucleolar processing of pre-18S ribosomal RNA. Required for optimal pre-ribosomal RNA transcription by RNA polymerase I together with a subset of U3 proteins required for transcription (t-UTPs). The chain is NET1-associated nuclear protein 1 (NAN1) from Saccharomyces cerevisiae (strain ATCC 204508 / S288c) (Baker's yeast).